The chain runs to 238 residues: tRNA (guanine-N(7)-)-methyltransferase (238 aa).

Glutamate 68, glutamate 93, aspartate 120, and aspartate 143 together coordinate S-adenosyl-L-methionine. The active site involves aspartate 143. Substrate contacts are provided by residues lysine 147, aspartate 179, and 216-219 (TKFE).

Belongs to the class I-like SAM-binding methyltransferase superfamily. TrmB family.

It carries out the reaction guanosine(46) in tRNA + S-adenosyl-L-methionine = N(7)-methylguanosine(46) in tRNA + S-adenosyl-L-homocysteine. It participates in tRNA modification; N(7)-methylguanine-tRNA biosynthesis. Catalyzes the formation of N(7)-methylguanine at position 46 (m7G46) in tRNA. In Shewanella putrefaciens (strain CN-32 / ATCC BAA-453), this protein is tRNA (guanine-N(7)-)-methyltransferase.